Here is a 684-residue protein sequence, read N- to C-terminus: Multisite-specific tRNA:(cytosine-C(5))-methyltransferase (684 aa).

The segment covering 1–12 has biased composition (basic residues); that stretch reads MARRKNFKKGNK. Residues 1–24 are disordered; it reads MARRKNFKKGNKKTFGARDDSRAQ. S-adenosyl-L-methionine is bound by residues 173 to 179, aspartate 202, aspartate 229, and aspartate 257; that span reads CAAPGSK. Catalysis depends on cysteine 310, which acts as the Nucleophile. Threonine 426 carries the post-translational modification Phosphothreonine. Serine 431 carries the post-translational modification Phosphoserine. A disordered region spans residues 650–684; sequence KATPSAEEKEKEKETTESPAETTTGTSTEAPSAAN. A compositionally biased stretch (basic and acidic residues) spans 655-665; the sequence is AEEKEKEKETT. The span at 666–684 shows a compositional bias: low complexity; the sequence is ESPAETTTGTSTEAPSAAN. Serine 667 carries the post-translational modification Phosphoserine.

This sequence belongs to the class I-like SAM-binding methyltransferase superfamily. RsmB/NOP family. TRM4 subfamily.

The protein resides in the nucleus. The protein localises to the nucleolus. It catalyses the reaction cytidine(34) in tRNA precursor + S-adenosyl-L-methionine = 5-methylcytidine(34) in tRNA precursor + S-adenosyl-L-homocysteine + H(+). It carries out the reaction cytidine(40) in tRNA precursor + S-adenosyl-L-methionine = 5-methylcytidine(40) in tRNA precursor + S-adenosyl-L-homocysteine + H(+). The catalysed reaction is cytidine(48) in tRNA + S-adenosyl-L-methionine = 5-methylcytidine(48) in tRNA + S-adenosyl-L-homocysteine + H(+). The enzyme catalyses cytidine(49) in tRNA + S-adenosyl-L-methionine = 5-methylcytidine(49) in tRNA + S-adenosyl-L-homocysteine + H(+). Functionally, methylates cytosine to m5C at several positions in different tRNAs and pre-tRNAs containing intron. Able to modify tRNAs at all four positions (34, 40, 48 and 49) at which m5C has been found in tRNAs. May be involved in ribosome biogenesis as its disruption leads to increased sensitivity to the antibiotic paromomycin. The sequence is that of Multisite-specific tRNA:(cytosine-C(5))-methyltransferase (NCL1) from Saccharomyces cerevisiae (strain ATCC 204508 / S288c) (Baker's yeast).